Reading from the N-terminus, the 381-residue chain is Gas vesicle protein C (381 aa).

Repeat copies occupy residues 22–59 (QAFAAYADEFAADVDDKRDVSELVDGIDTLRTEMNSTN), 60–84 (DAFRAYSEEFAADVEHFHTSVADRR), 85–122 (DAFDAYADIFATDVAEMQDVSDLLAAIDDLRAEMDETH), 123–160 (EAFDAYADAFVTDVATLRDVSDLLTAISELQSEFVSVQ), 161–192 (GEFNGYASEFGADIDQFHAVVAEKRDGHKDVA), 193–232 (DAFLQYREEFHGVEVQSLLDNIAAFQREMGDYRKAFETTE), and 233–274 (EAFA…IPPI). Residues 22-274 (QAFAAYADEF…TETEVDIPPI (253 aa)) form a 7 X approximate tandem repeats region. A disordered region spans residues 261-333 (AVTGTETEVD…EDDQFLDDET (73 aa)). Acidic residues predominate over residues 276-318 (DSVEPDGEDEDSKADDVEAEAEVETVEMEFGAEMDTEADEDVQ).

It belongs to the halobacterial gas vesicle GvpC family. Detected as 2 slightly different sizes in vivo; the proteins appears larger in SDS-PAGE probably due to the acidic tail.

It is found in the gas vesicle. In terms of biological role, confers stability, involved in shaping gas vesicles (GV), hollow, gas filled proteinaceous nanostructures found in some microorganisms. They allow positioning of halobacteria at the optimal depth for growth in the poorly aerated, shallow brine pools of their habitat. Expression of a 9.5 kb mc-vac DNA fragment containing 2 divergently transcribed regions (gvpD-gvpE-gvpF-gvpG-gvpH-gvpI-gvpJ-gvpK-gvpL-gvpM and gvpA-gvpC-gvpN-gvpO) allows H.volcanii to produce gas vesicles. This chain is Gas vesicle protein C, found in Haloferax mediterranei (strain ATCC 33500 / DSM 1411 / JCM 8866 / NBRC 14739 / NCIMB 2177 / R-4) (Halobacterium mediterranei).